Here is a 553-residue protein sequence, read N- to C-terminus: Putative transport protein YidE (553 aa).

5 helical membrane-spanning segments follow: residues 4–24 (IALT…IGNV), 28–48 (GIGL…HFVS), 65–85 (FGLI…FFAS), 95–115 (LFAV…HKLF), and 158–178 (MSYA…MWML). 2 consecutive RCK C-terminal domains span residues 191-276 (QQHE…VIGQ) and 279-361 (DTSL…VLGN). A run of 6 helical transmembrane segments spans residues 371–391 (MLPV…PVFV), 393–413 (GFPA…ALIL), 439–459 (IVLF…NTLV), 464–484 (LSWI…VGIL), 493–513 (YLTM…LAFA), and 533–553 (LVMF…WSIG).

This sequence belongs to the AAE transporter (TC 2.A.81) family. YidE subfamily.

The protein localises to the cell membrane. The protein is Putative transport protein YidE of Escherichia coli O7:K1 (strain IAI39 / ExPEC).